We begin with the raw amino-acid sequence, 257 residues long: tRNA (guanine-N(1)-)-methyltransferase (257 aa).

S-adenosyl-L-methionine is bound by residues Gly112 and 136–141 (LGDYVL).

This sequence belongs to the RNA methyltransferase TrmD family. Homodimer.

It localises to the cytoplasm. It carries out the reaction guanosine(37) in tRNA + S-adenosyl-L-methionine = N(1)-methylguanosine(37) in tRNA + S-adenosyl-L-homocysteine + H(+). Functionally, specifically methylates guanosine-37 in various tRNAs. This chain is tRNA (guanine-N(1)-)-methyltransferase, found in Salinispora arenicola (strain CNS-205).